A 182-amino-acid chain; its full sequence is Oligoribonuclease (182 aa).

Residues Leu7–Leu170 form the Exonuclease domain. Residue Tyr128 is part of the active site.

Belongs to the oligoribonuclease family.

Its subcellular location is the cytoplasm. In terms of biological role, 3'-to-5' exoribonuclease specific for small oligoribonucleotides. The sequence is that of Oligoribonuclease from Hahella chejuensis (strain KCTC 2396).